A 106-amino-acid polypeptide reads, in one-letter code: N(2)-fixation sustaining protein CowN (106 aa).

Belongs to the CowN family.

Functionally, is required to sustain N(2)-dependent growth in the presence of low levels of carbon monoxide (CO). Probably acts by protecting the N(2) fixation ability of the nitrogenase complex, which is inactivated in the presence of CO. In Denitrovibrio acetiphilus (strain DSM 12809 / NBRC 114555 / N2460), this protein is N(2)-fixation sustaining protein CowN.